The following is a 209-amino-acid chain: Orotate phosphoribosyltransferase (209 aa).

Residues Arg96, Lys100, His102, and Glu122–Ser130 each bind 5-phospho-alpha-D-ribose 1-diphosphate. Ser126 is an orotate binding site.

It belongs to the purine/pyrimidine phosphoribosyltransferase family. PyrE subfamily. In terms of assembly, homodimer. Mg(2+) serves as cofactor.

The enzyme catalyses orotidine 5'-phosphate + diphosphate = orotate + 5-phospho-alpha-D-ribose 1-diphosphate. Its pathway is pyrimidine metabolism; UMP biosynthesis via de novo pathway; UMP from orotate: step 1/2. Catalyzes the transfer of a ribosyl phosphate group from 5-phosphoribose 1-diphosphate to orotate, leading to the formation of orotidine monophosphate (OMP). This Streptococcus thermophilus (strain CNRZ 1066) protein is Orotate phosphoribosyltransferase.